The sequence spans 289 residues: 4-diphosphocytidyl-2-C-methyl-D-erythritol kinase (289 aa).

The active site involves Lys-16. 99-109 is an ATP binding site; that stretch reads PMGGGLGGGSS. Asp-141 is an active-site residue.

It belongs to the GHMP kinase family. IspE subfamily.

The enzyme catalyses 4-CDP-2-C-methyl-D-erythritol + ATP = 4-CDP-2-C-methyl-D-erythritol 2-phosphate + ADP + H(+). Its pathway is isoprenoid biosynthesis; isopentenyl diphosphate biosynthesis via DXP pathway; isopentenyl diphosphate from 1-deoxy-D-xylulose 5-phosphate: step 3/6. In terms of biological role, catalyzes the phosphorylation of the position 2 hydroxy group of 4-diphosphocytidyl-2C-methyl-D-erythritol. In Ralstonia pickettii (strain 12J), this protein is 4-diphosphocytidyl-2-C-methyl-D-erythritol kinase.